Reading from the N-terminus, the 196-residue chain is 3-isopropylmalate dehydratase small subunit (196 aa).

Belongs to the LeuD family. LeuD type 1 subfamily. In terms of assembly, heterodimer of LeuC and LeuD.

It carries out the reaction (2R,3S)-3-isopropylmalate = (2S)-2-isopropylmalate. Its pathway is amino-acid biosynthesis; L-leucine biosynthesis; L-leucine from 3-methyl-2-oxobutanoate: step 2/4. Catalyzes the isomerization between 2-isopropylmalate and 3-isopropylmalate, via the formation of 2-isopropylmaleate. In Streptococcus thermophilus (strain CNRZ 1066), this protein is 3-isopropylmalate dehydratase small subunit.